A 511-amino-acid chain; its full sequence is Probable DNA ligase (511 aa).

Residue Glu209 coordinates ATP. Lys211 functions as the N6-AMP-lysine intermediate in the catalytic mechanism. Residues Arg216, Arg231, Glu260, Phe299, Arg371, and Lys377 each coordinate ATP.

Belongs to the ATP-dependent DNA ligase family. Mg(2+) serves as cofactor.

It catalyses the reaction ATP + (deoxyribonucleotide)n-3'-hydroxyl + 5'-phospho-(deoxyribonucleotide)m = (deoxyribonucleotide)n+m + AMP + diphosphate.. Its function is as follows. DNA ligase that seals nicks in double-stranded DNA during DNA replication, DNA recombination and DNA repair. The polypeptide is Probable DNA ligase (Mycolicibacterium gilvum (strain PYR-GCK) (Mycobacterium gilvum (strain PYR-GCK))).